Here is a 156-residue protein sequence, read N- to C-terminus: Small ribosomal subunit protein uS7 (156 aa).

Belongs to the universal ribosomal protein uS7 family. Part of the 30S ribosomal subunit. Contacts proteins S9 and S11.

One of the primary rRNA binding proteins, it binds directly to 16S rRNA where it nucleates assembly of the head domain of the 30S subunit. Is located at the subunit interface close to the decoding center, probably blocks exit of the E-site tRNA. In Shewanella sediminis (strain HAW-EB3), this protein is Small ribosomal subunit protein uS7.